A 310-amino-acid chain; its full sequence is Fucose-specific lectin (310 aa).

Tandem repeats lie at residues 1–53 (MSTP…KNVI), 54–103 (AKAK…AGAK), 104–151 (FTVA…EGTN), 152–209 (LGVA…FDKA), 210–256 (PPRC…DKRT), and 257–310 (ITPV…PPAE). The tract at residues 1–310 (MSTPGAQEVL…LGRRALPPAE (310 aa)) is 6 X approximate tandem repeats. Arg-25, Glu-37, Trp-44, Arg-73, Glu-85, Trp-94, Arg-126, Glu-138, Trp-146, Arg-177, Gln-189, Trp-198, Arg-230, Gln-242, Arg-277, and Glu-291 together coordinate beta-L-fucose.

Belongs to the fungal fucose-specific lectin family.

Lectin that specifically binds to L-fucose and weakly reacts with mannose and N-acetyl-neuraminic acid. Has strongest preference for the alpha-1,6-fucosylated chain (core fucose) on glycoproteins among alpha-1,2-, alpha-1,3-, alpha-1,4-, and alpha-1,6-fucosylated chains. Binds to fucose residues of IgE in mice and human, causing antigen-independent IgE-mediated mast cell activation and anaphylactoid reactions in mice and is possibly implicated in allergic response to Aspergillus oryzae in humans. Induces secretion of pro-inflammatory cytokines IL6 and IL8 implicated in ocular diseases such as mycotic keratitis, probably through its interaction with host toll-like receptors TLR2 and TLR4, followed by up-regulation of pro-inflammatory cytokines. This Aspergillus oryzae (Yellow koji mold) protein is Fucose-specific lectin.